The following is a 1537-amino-acid chain: Adhesion G protein-coupled receptor L3 (1537 aa).

Positions 1–19 (MWPPQLLILTMLLAPVVHG) are cleaved as a signal peptide. Residues 20-943 (GKHNERHPAL…VKHSDAVHDL (924 aa)) lie on the Extracellular side of the membrane. The tract at residues 53-80 (PAAERSTAHRGQGPRGAARGVRGPGAPG) is disordered. The SUEL-type lectin domain maps to 103-192 (SCESYPIELR…KYLEVQYECV (90 aa)). Disulfide bonds link cysteine 104–cysteine 134, cysteine 113–cysteine 191, cysteine 146–cysteine 178, cysteine 159–cysteine 165, and cysteine 203–cysteine 385. N-linked (GlcNAc...) asparagine glycosylation is present at asparagine 161. In terms of domain architecture, Olfactomedin-like spans 202-461 (LCPGLLKGVY…VVKYSLDFGP (260 aa)). The tract at residues 317-347 (YHDTSPYRWGGKSDIDLAVDENGLWVIYATE) is interaction with FLRT3. Residues aspartate 332, asparagine 380, alanine 381, and valine 435 each contribute to the Ca(2+) site. A disordered region spans residues 521-540 (RSTTASLPGRRNRSTSTPSP). N-linked (GlcNAc...) asparagine glycans are attached at residues asparagine 532, asparagine 617, asparagine 827, asparagine 840, asparagine 885, and asparagine 911. One can recognise a GAIN-B domain in the interval 756 to 935 (DIVRENTDNI…AVLMAHVEVK (180 aa)). Cystine bridges form between cysteine 886–cysteine 917 and cysteine 905–cysteine 919. Residues 886–935 (CSFWSYSKRTMTGYWSTQGCRLLTTNKTHTTCSCNHLTNFAVLMAHVEVK) are GPS. A stachel region spans residues 923-939 (TNFAVLMAHVEVKHSDA). A helical transmembrane segment spans residues 944–969 (LLDVITWVGILLSLVCLLICIFTFCF). Topologically, residues 970 to 975 (FRGLQS) are cytoplasmic. Residues 976–999 (DRNTIHKNLCISLFVAELLFLIGI) traverse the membrane as a helical segment. Asparagine 1000 is a glycosylation site (N-linked (GlcNAc...) asparagine). Residues 1000–1006 (NRTDQPI) are Extracellular-facing. The chain crosses the membrane as a helical span at residues 1007–1034 (ACAVFAALLHFFFLAAFTWMFLEGVQLY). Cysteine 1008 and cysteine 1080 are oxidised to a cystine. Topologically, residues 1035–1048 (IMLVEVFESEHSRR) are cytoplasmic. The chain crosses the membrane as a helical span at residues 1049-1071 (KYFYLVGYGMPALIVAVSAAVDY). Over 1072–1086 (RSYGTDKVCWLRLDT) the chain is Extracellular. A helical transmembrane segment spans residues 1087-1112 (YFIWSFIGPATLIIMLNVIFLGIALY). The Cytoplasmic portion of the chain corresponds to 1113-1142 (KMFHHTAILKPESGCLDNINYEDNRPFIKS). The chain crosses the membrane as a helical span at residues 1143–1163 (WVIGAIALLCLLGLTWAFGLM). Topologically, residues 1164 to 1168 (YINES) are extracellular. An N-linked (GlcNAc...) asparagine glycan is attached at asparagine 1166. The chain crosses the membrane as a helical span at residues 1169-1195 (TVIMAYLFTIFNSLQGMFIFIFHCVLQ). Topologically, residues 1196–1537 (KKVRKEYGKC…KGPAHLVTSL (342 aa)) are cytoplasmic. Positions 1213–1237 (GKSTESSIGSGKTSGSRTPGRYSTG) are disordered. Phosphoserine occurs at positions 1254 and 1522. Residues 1512 to 1537 (FIVPPNKDGASPEGTSKGPAHLVTSL) are disordered. Positions 1532-1537 (HLVTSL) match the PDZ-binding motif.

Belongs to the G-protein coupled receptor 2 family. LN-TM7 subfamily. In terms of assembly, heterodimer of 2 chains generated by proteolytic processing; the large extracellular N-terminal fragment and the membrane-bound C-terminal fragment predominantly remain associated and non-covalently linked. Interacts (via olfactomedin-like domain) with FLRT1 (via extracellular domain). Interacts (via olfactomedin-like domain) with FLRT2 (via extracellular domain). Interacts (via olfactomedin-like domain) with FLRT3 (via extracellular domain); the interaction is direct. Interacts (via extracellular domain) with TENM1. Interacts (via extracellular domain) with TENM2. Interacts (via extracellular domain) with TENM3. Identified in a complex with FLRT3 and UNC5B; does not interact with UNC5B by itself. Identified in a complex with FLRT3 and UNC5D; does not interact with UNC5D by itself. Interacts (via PDZ-binding motif) with SHANK3. Interacts (via PDZ-binding motif) with DLG4. Post-translationally, autoproteolytically processed at the GPS region of the GAIN-B domain; this cleavage modulates receptor activity. In terms of processing, O-glycosylated (major) and N-glycosylated. As to expression, localizes to postsynaptic spines in non-overlapping dendritic domains of CA1-region pyramidal neurons: specifically localizes to excitatory synapses in the S.oriens and S.radiatum, corresponding to distinct presynaptic inputs onto CA1-region pyramidal neurons.

The protein resides in the cell membrane. It is found in the postsynaptic cell membrane. The protein localises to the cell projection. It localises to the axon. Its subcellular location is the cell junction. Forms a heterodimer of 2 chains generated by proteolytic processing that remain associated through non-covalent interactions mediated by the GAIN-B domain. In the inactivated receptor, the Stachel sequence (also named stalk) is embedded in the GAIN-B domain, where it adopts a beta-strand conformation. On activation, the Stachel moves into the 7 transmembrane region and adopts a twisted hook-shaped configuration that forms contacts within the receptor, leading to coupling of a G-alpha protein, which activates signaling. The cleaved GAIN-B and N-terminal domains can then dissociate from the rest of the receptor. Its function is as follows. Orphan adhesion G-protein coupled receptor (aGPCR), which mediates synapse specificity. Ligand binding causes a conformation change that triggers signaling via guanine nucleotide-binding proteins (G proteins) and modulates the activity of downstream effectors. ADGRL3 is coupled with different classes of G alpha proteins, such as G(12)/G(13), G(s), G(i) or G(q), depending on the context. Coupling to G(12)/G(13) G proteins, which mediates the activation Rho small GTPases is the most efficient. Following G-protein coupled receptor activation, associates with cell adhesion molecules that are expressed at the surface of adjacent cells to direct synapse specificity. Specifically mediates the establishment of Schaffer-collateral synapses formed by CA3-region axons on CA1-region pyramidal neurons in the hippocampus. Localizes to postsynaptic spines in excitatory synapses in the S.oriens and S.radiatum and interacts with presynaptic cell adhesion molecules FLRT3 and TENM2, promoting synapse formation. Plays a role in the development of glutamatergic synapses in the cortex. Important in determining the connectivity rates between the principal neurons in the cortex. In terms of biological role, orphan adhesion G-protein coupled receptor (aGPCR), which mediates synapse specificity. Ligand binding causes a conformation change that triggers signaling via guanine nucleotide-binding proteins (G proteins) and modulates the activity of downstream effectors, such as adenylate cyclase. Isoform 1 is specifically coupled to G(s) G proteins and mediates activation of adenylate cyclase activity. Following G-protein coupled receptor activation, undergoes liquid-liquid phase transition, associates with (1) cell adhesion molecules that are expressed at the surface of adjacent cells, as well as (2) PDZ-containing proteins, such as SHANK3 and DLG4, in the cytoplasm to direct synapse formation. Orphan adhesion G-protein coupled receptor (aGPCR). Ligand binding causes a conformation change that triggers signaling via guanine nucleotide-binding proteins (G proteins) and modulates the activity of downstream effectors, such as RhoA pathway. Isoform 7 is coupled to G(12) and/or G(13) G proteins (GNA12 and GNA13, respectively) and mediates the activation Rho small GTPases. The protein is Adhesion G protein-coupled receptor L3 of Mus musculus (Mouse).